A 143-amino-acid chain; its full sequence is Glutamyl-tRNA(Gln) amidotransferase subunit C, chloroplastic/mitochondrial (143 aa).

It belongs to the GatC family. As to quaternary structure, subunit of the heterotrimeric GatCAB amidotransferase (AdT) complex, composed of A, B and C subunits.

It localises to the mitochondrion. It is found in the plastid. The protein resides in the chloroplast. The catalysed reaction is L-glutamyl-tRNA(Gln) + L-glutamine + ATP + H2O = L-glutaminyl-tRNA(Gln) + L-glutamate + ADP + phosphate + H(+). Allows the formation of correctly charged Gln-tRNA(Gln) through the transamidation of misacylated Glu-tRNA(Gln) in chloroplasts and mitochondria. The reaction takes place in the presence of glutamine and ATP through an activated gamma-phospho-Glu-tRNA(Gln). This chain is Glutamyl-tRNA(Gln) amidotransferase subunit C, chloroplastic/mitochondrial, found in Ricinus communis (Castor bean).